A 456-amino-acid chain; its full sequence is Adenylosuccinate lyase (456 aa).

Residues 15–16 (RY), 90–92 (NHD), and 122–123 (TS) each bind N(6)-(1,2-dicarboxyethyl)-AMP. Histidine 171 (proton donor/acceptor) is an active-site residue. Glutamine 247 is a N(6)-(1,2-dicarboxyethyl)-AMP binding site. Serine 295 acts as the Proton donor/acceptor in catalysis. N(6)-(1,2-dicarboxyethyl)-AMP is bound by residues serine 296, 301 to 303 (KVN), asparagine 309, arginine 335, and 340 to 344 (STVLR).

It belongs to the lyase 1 family. Adenylosuccinate lyase subfamily. As to quaternary structure, homotetramer. Residues from neighboring subunits contribute catalytic and substrate-binding residues to each active site.

It carries out the reaction N(6)-(1,2-dicarboxyethyl)-AMP = fumarate + AMP. It catalyses the reaction (2S)-2-[5-amino-1-(5-phospho-beta-D-ribosyl)imidazole-4-carboxamido]succinate = 5-amino-1-(5-phospho-beta-D-ribosyl)imidazole-4-carboxamide + fumarate. It functions in the pathway purine metabolism; AMP biosynthesis via de novo pathway; AMP from IMP: step 2/2. Its pathway is purine metabolism; IMP biosynthesis via de novo pathway; 5-amino-1-(5-phospho-D-ribosyl)imidazole-4-carboxamide from 5-amino-1-(5-phospho-D-ribosyl)imidazole-4-carboxylate: step 2/2. In terms of biological role, catalyzes two reactions in de novo purine nucleotide biosynthesis. Catalyzes the breakdown of 5-aminoimidazole- (N-succinylocarboxamide) ribotide (SAICAR or 2-[5-amino-1-(5-phospho-beta-D-ribosyl)imidazole-4-carboxamido]succinate) to 5-aminoimidazole-4-carboxamide ribotide (AICAR or 5-amino-1-(5-phospho-beta-D-ribosyl)imidazole-4-carboxamide) and fumarate, and of adenylosuccinate (ADS or N(6)-(1,2-dicarboxyethyl)-AMP) to adenosine monophosphate (AMP) and fumarate. In Buchnera aphidicola subsp. Acyrthosiphon pisum (strain APS) (Acyrthosiphon pisum symbiotic bacterium), this protein is Adenylosuccinate lyase (purB).